A 126-amino-acid chain; its full sequence is Small ribosomal subunit protein uS11 (126 aa).

This sequence belongs to the universal ribosomal protein uS11 family. In terms of assembly, part of the 30S ribosomal subunit.

Located on the platform of the 30S subunit. The protein is Small ribosomal subunit protein uS11 of Methanosarcina acetivorans (strain ATCC 35395 / DSM 2834 / JCM 12185 / C2A).